We begin with the raw amino-acid sequence, 681 residues long: Terpene synthase 6, chloroplastic (681 aa).

Residues aspartate 433, aspartate 437, asparagine 577, and glutamate 585 each coordinate Mg(2+). Residues 433-437 carry the DDXXD motif motif; it reads DDLFD.

The protein belongs to the terpene synthase family. Mg(2+) is required as a cofactor. In terms of tissue distribution, expressed in leaves.

It is found in the plastid. Its subcellular location is the chloroplast. The protein operates within secondary metabolite biosynthesis; terpenoid biosynthesis. Functionally, may be involved in the biosynthesis of ent-kaurene diterpenoids natural products such as oridonin, miltiradiene, eriocalyxin B and nezukol, known to exhibit antitumor, anti-inflammatory and antibacterial activities. This chain is Terpene synthase 6, chloroplastic, found in Isodon rubescens (Rabdosia rubescens).